A 300-amino-acid chain; its full sequence is Putative glycosyltransferase ORF300 (300 aa).

This sequence belongs to the glycosyltransferase group 1 family. Glycosyltransferase 4 subfamily.

This chain is Putative glycosyltransferase ORF300, found in Acidianus hospitalis (AFV-1).